We begin with the raw amino-acid sequence, 93 residues long: MGRSLKKGPFVDEHLMKKVEAQANDEKKKVIKTWSRRSTIFPSFIGYTIAVYDGRKHVPVYIQEDMVGHKLGEFAPTRTYKGHAADDKKTRRK.

Belongs to the universal ribosomal protein uS19 family.

In terms of biological role, protein S19 forms a complex with S13 that binds strongly to the 16S ribosomal RNA. The chain is Small ribosomal subunit protein uS19 from Streptococcus gordonii (strain Challis / ATCC 35105 / BCRC 15272 / CH1 / DL1 / V288).